A 456-amino-acid polypeptide reads, in one-letter code: Short chain dehydrogenase tazN (456 aa).

Residues Val-45, Asp-99, Asn-126, Arg-160, Tyr-195, Lys-199, and Thr-229 each coordinate NADP(+). Residue Tyr-195 is the Proton donor of the active site. The Lowers pKa of active site Tyr role is filled by Lys-199.

Belongs to the short-chain dehydrogenases/reductases (SDR) family.

The protein operates within secondary metabolite biosynthesis. Short chain dehydrogenase; part of the gene cluster that mediates the biosynthesis of azaterrilone A and other azaphilones, a class of fungal metabolites characterized by a highly oxygenated pyrano-quinone bicyclic core and exhibiting a broad range of bioactivities. The first step of the pathway begins with the non-reducing polyketide synthase tazA that assembles one acetyl-CoA starter unit, five malonyl-CoA units, and catalyzes a series of Claisen condensations, methylation, PT-mediated cyclization, and finally releases the first hexaketide precursor through the R-domain. The tazA product then undergoes reduction on its terminal ketone and the following pyran-ring formation by yet undetermined enzyme(s). Dehydration and enoyl reduction, possibly involving the trans-enoyl reductase tazE leads to the next intermediate. TazD is predicted as an acetyltransferase and might catalyze the acetylation steps leading to the synthesis of azaterrilone A. Azaterrilone A is not the final product of the taz pathway and both the highly reducing polyketide synthase tazB and the dual enzyme tazHJ catalyze late steps of the pathway, leading to the production of the 2 final stereoisomers that contain additional polyketide modification whose structures have still to be determined. In Aspergillus terreus (strain NIH 2624 / FGSC A1156), this protein is Short chain dehydrogenase tazN.